Consider the following 418-residue polypeptide: Queuine tRNA-ribosyltransferase accessory subunit 2 (418 aa).

Zn(2+)-binding residues include Cys325, Cys327, Cys330, and His356.

The protein belongs to the queuine tRNA-ribosyltransferase family. QTRT2 subfamily. As to quaternary structure, heterodimer of a catalytic subunit and an accessory subunit. The cofactor is Zn(2+).

Its subcellular location is the cytoplasm. Functionally, non-catalytic subunit of the queuine tRNA-ribosyltransferase (TGT) that catalyzes the base-exchange of a guanine (G) residue with queuine (Q) at position 34 (anticodon wobble position) in tRNAs with GU(N) anticodons (tRNA-Asp, -Asn, -His and -Tyr), resulting in the hypermodified nucleoside queuosine (7-(((4,5-cis-dihydroxy-2-cyclopenten-1-yl)amino)methyl)-7-deazaguanosine). In Drosophila erecta (Fruit fly), this protein is Queuine tRNA-ribosyltransferase accessory subunit 2.